The primary structure comprises 385 residues: MSLQSIRYKRGMLQVLDQLQVPHVERYIPVSTAKEGWHVIKEMHVRGAPAIAIVAVLSLSIELTELMDHEKLSTEADEVEAYILEKLDYLVTSRPTAVNLSDAAIKLKTLVQKRKQIGDPKGKDLAEAYVEAAEKMLIDDAMDNHRLGDFGATWIVNNTPVGKEGKKVGVLTHCNTGSLATAGYGTALGVIRSLLASDKLEHAYCTETRPYNQGARLTAFELVHDKIPATLITDSMAASLLAQKGAGLAAIVVGADRVVANGDTANKIGTYQLAVLAKYHGVKFIVAAPRTTIDLRTKEGEDIIIEERAKSEVTRITGPRISDLGKNEENITLETVNIAAPGIDVWNPAFDVTPYDLIDAIVTEVGVAEKNADGLFQLEKLFGFP.

The active-site Proton donor is D256.

The protein belongs to the eIF-2B alpha/beta/delta subunits family. MtnA subfamily.

The protein localises to the cytoplasm. It is found in the nucleus. It carries out the reaction 5-(methylsulfanyl)-alpha-D-ribose 1-phosphate = 5-(methylsulfanyl)-D-ribulose 1-phosphate. Its pathway is amino-acid biosynthesis; L-methionine biosynthesis via salvage pathway; L-methionine from S-methyl-5-thio-alpha-D-ribose 1-phosphate: step 1/6. Its function is as follows. Catalyzes the interconversion of methylthioribose-1-phosphate (MTR-1-P) into methylthioribulose-1-phosphate (MTRu-1-P). The protein is Methylthioribose-1-phosphate isomerase of Arthroderma otae (strain ATCC MYA-4605 / CBS 113480) (Microsporum canis).